Consider the following 450-residue polypeptide: UDP-N-acetylmuramoylalanine--D-glutamate ligase (450 aa).

An ATP-binding site is contributed by 115–121 (GTNGKTT).

The protein belongs to the MurCDEF family.

It localises to the cytoplasm. It carries out the reaction UDP-N-acetyl-alpha-D-muramoyl-L-alanine + D-glutamate + ATP = UDP-N-acetyl-alpha-D-muramoyl-L-alanyl-D-glutamate + ADP + phosphate + H(+). Its pathway is cell wall biogenesis; peptidoglycan biosynthesis. Functionally, cell wall formation. Catalyzes the addition of glutamate to the nucleotide precursor UDP-N-acetylmuramoyl-L-alanine (UMA). The chain is UDP-N-acetylmuramoylalanine--D-glutamate ligase from Desulfatibacillum aliphaticivorans.